The chain runs to 447 residues: Phosphoglucosamine mutase (447 aa).

Catalysis depends on Ser108, which acts as the Phosphoserine intermediate. The Mg(2+) site is built by Ser108, Asp247, Asp249, and Asp251. The residue at position 108 (Ser108) is a Phosphoserine.

Belongs to the phosphohexose mutase family. The cofactor is Mg(2+). In terms of processing, activated by phosphorylation.

The catalysed reaction is alpha-D-glucosamine 1-phosphate = D-glucosamine 6-phosphate. Its function is as follows. Catalyzes the conversion of glucosamine-6-phosphate to glucosamine-1-phosphate. The sequence is that of Phosphoglucosamine mutase from Bordetella avium (strain 197N).